The primary structure comprises 198 residues: Probable chemoreceptor glutamine deamidase CheD (198 aa).

Belongs to the CheD family.

It carries out the reaction L-glutaminyl-[protein] + H2O = L-glutamyl-[protein] + NH4(+). Its function is as follows. Probably deamidates glutamine residues to glutamate on methyl-accepting chemotaxis receptors (MCPs), playing an important role in chemotaxis. This chain is Probable chemoreceptor glutamine deamidase CheD, found in Xanthomonas axonopodis pv. citri (strain 306).